The chain runs to 493 residues: Glutamyl-tRNA(Gln) amidotransferase subunit A (493 aa).

Catalysis depends on charge relay system residues Lys81 and Ser156. Ser180 serves as the catalytic Acyl-ester intermediate.

Belongs to the amidase family. GatA subfamily. Heterotrimer of A, B and C subunits.

It carries out the reaction L-glutamyl-tRNA(Gln) + L-glutamine + ATP + H2O = L-glutaminyl-tRNA(Gln) + L-glutamate + ADP + phosphate + H(+). Allows the formation of correctly charged Gln-tRNA(Gln) through the transamidation of misacylated Glu-tRNA(Gln) in organisms which lack glutaminyl-tRNA synthetase. The reaction takes place in the presence of glutamine and ATP through an activated gamma-phospho-Glu-tRNA(Gln). In Mycolicibacterium paratuberculosis (strain ATCC BAA-968 / K-10) (Mycobacterium paratuberculosis), this protein is Glutamyl-tRNA(Gln) amidotransferase subunit A.